A 912-amino-acid chain; its full sequence is Translation initiation factor IF-2 (912 aa).

A disordered region spans residues 26–297 (SDQGEFVKSA…RGRKSKRAKR (272 aa)). Positions 56–74 (KPAPAASNGAAAEAAAPPK) are enriched in low complexity. A compositionally biased stretch (pro residues) spans 100-120 (APEPPAAPAAPAAPAPKPSPA). The segment covering 121-131 (ARPAAAEAAAP) has biased composition (low complexity). Pro residues-rich tracts occupy residues 132–152 (APAP…PGAP), 173–183 (PRPQAPRPGAP), and 192–218 (NMPP…PGGG). The span at 219-283 (PRPGGAGRPG…GAAGAFGRPG (65 aa)) shows a compositional bias: gly residues. The segment covering 287-296 (KRGRKSKRAK) has biased composition (basic residues). The tr-type G domain maps to 408–579 (TRPPVVTVMG…AVLLTADAAL (172 aa)). Residues 417–424 (GHVDHGKT) form a G1 region. 417 to 424 (GHVDHGKT) is a GTP binding site. Positions 442-446 (GITQH) are G2. The G3 stretch occupies residues 467–470 (DTPG). Residues 467–471 (DTPGH) and 521–524 (NKID) contribute to the GTP site. The interval 521-524 (NKID) is G4. The tract at residues 557-559 (SAR) is G5.

This sequence belongs to the TRAFAC class translation factor GTPase superfamily. Classic translation factor GTPase family. IF-2 subfamily.

It is found in the cytoplasm. Its function is as follows. One of the essential components for the initiation of protein synthesis. Protects formylmethionyl-tRNA from spontaneous hydrolysis and promotes its binding to the 30S ribosomal subunits. Also involved in the hydrolysis of GTP during the formation of the 70S ribosomal complex. This Mycobacteroides abscessus (strain ATCC 19977 / DSM 44196 / CCUG 20993 / CIP 104536 / JCM 13569 / NCTC 13031 / TMC 1543 / L948) (Mycobacterium abscessus) protein is Translation initiation factor IF-2.